The primary structure comprises 359 residues: Biotin synthase (359 aa).

The Radical SAM core domain maps to 47–276 (HHGRRVRIHV…EADLRMAGGR (230 aa)). Positions 65, 69, and 72 each coordinate [4Fe-4S] cluster. [2Fe-2S] cluster contacts are provided by C109, C141, C201, and R271. Residues 320–359 (EPVIVEDGPERQTPATADDTPSGDPEAADRRRQPSAGPAG) are disordered.

It belongs to the radical SAM superfamily. Biotin synthase family. In terms of assembly, homodimer. The cofactor is [4Fe-4S] cluster. [2Fe-2S] cluster serves as cofactor.

The catalysed reaction is (4R,5S)-dethiobiotin + (sulfur carrier)-SH + 2 reduced [2Fe-2S]-[ferredoxin] + 2 S-adenosyl-L-methionine = (sulfur carrier)-H + biotin + 2 5'-deoxyadenosine + 2 L-methionine + 2 oxidized [2Fe-2S]-[ferredoxin]. It functions in the pathway cofactor biosynthesis; biotin biosynthesis; biotin from 7,8-diaminononanoate: step 2/2. In terms of biological role, catalyzes the conversion of dethiobiotin (DTB) to biotin by the insertion of a sulfur atom into dethiobiotin via a radical-based mechanism. In Salinibacter ruber (strain DSM 13855 / M31), this protein is Biotin synthase.